A 446-amino-acid polypeptide reads, in one-letter code: tRNA-2-methylthio-N(6)-dimethylallyladenosine synthase (446 aa).

Residues 6-122 (RRYHITTFGC…LGDLLQQVFD (117 aa)) enclose the MTTase N-terminal domain. Residues cysteine 15, cysteine 51, cysteine 85, cysteine 157, cysteine 161, and cysteine 164 each coordinate [4Fe-4S] cluster. Positions 143–380 (RDSNITAWVN…NHLVATKAAE (238 aa)) constitute a Radical SAM core domain. The TRAM domain maps to 383 to 446 (QRYLGRIEEI…RPFSLTGVIF (64 aa)).

This sequence belongs to the methylthiotransferase family. MiaB subfamily. In terms of assembly, monomer. The cofactor is [4Fe-4S] cluster.

The protein localises to the cytoplasm. It carries out the reaction N(6)-dimethylallyladenosine(37) in tRNA + (sulfur carrier)-SH + AH2 + 2 S-adenosyl-L-methionine = 2-methylsulfanyl-N(6)-dimethylallyladenosine(37) in tRNA + (sulfur carrier)-H + 5'-deoxyadenosine + L-methionine + A + S-adenosyl-L-homocysteine + 2 H(+). Functionally, catalyzes the methylthiolation of N6-(dimethylallyl)adenosine (i(6)A), leading to the formation of 2-methylthio-N6-(dimethylallyl)adenosine (ms(2)i(6)A) at position 37 in tRNAs that read codons beginning with uridine. The protein is tRNA-2-methylthio-N(6)-dimethylallyladenosine synthase of Microcystis aeruginosa (strain NIES-843 / IAM M-2473).